The sequence spans 216 residues: Pyridoxine/pyridoxamine 5'-phosphate oxidase (216 aa).

FMN-binding positions include 63-68 (RMVLMK), 78-79 (YS), Lys85, and Gln107. Position 68 (Lys68) interacts with substrate. Substrate-binding residues include Tyr125 and Arg129. FMN is bound by residues 142–143 (QS) and Trp187. Residue 193–195 (RLH) coordinates substrate. Residue Arg197 coordinates FMN.

It belongs to the pyridoxamine 5'-phosphate oxidase family. As to quaternary structure, homodimer. The cofactor is FMN.

It catalyses the reaction pyridoxamine 5'-phosphate + O2 + H2O = pyridoxal 5'-phosphate + H2O2 + NH4(+). It carries out the reaction pyridoxine 5'-phosphate + O2 = pyridoxal 5'-phosphate + H2O2. Its pathway is cofactor metabolism; pyridoxal 5'-phosphate salvage; pyridoxal 5'-phosphate from pyridoxamine 5'-phosphate: step 1/1. It functions in the pathway cofactor metabolism; pyridoxal 5'-phosphate salvage; pyridoxal 5'-phosphate from pyridoxine 5'-phosphate: step 1/1. Its function is as follows. Catalyzes the oxidation of either pyridoxine 5'-phosphate (PNP) or pyridoxamine 5'-phosphate (PMP) into pyridoxal 5'-phosphate (PLP). The polypeptide is Pyridoxine/pyridoxamine 5'-phosphate oxidase (Bradyrhizobium sp. (strain BTAi1 / ATCC BAA-1182)).